A 587-amino-acid chain; its full sequence is Sulfite reductase [NADPH] hemoprotein beta-component (587 aa).

Residues 1 to 13 (MQSTDNDLSQSPP) are compositionally biased toward polar residues. The segment at 1–20 (MQSTDNDLSQSPPKLSADEQ) is disordered. [4Fe-4S] cluster-binding residues include Cys-439, Cys-445, Cys-484, and Cys-488. Cys-488 contacts siroheme.

Belongs to the nitrite and sulfite reductase 4Fe-4S domain family. As to quaternary structure, alpha(8)-beta(8). The alpha component is a flavoprotein, the beta component is a hemoprotein. The cofactor is siroheme. [4Fe-4S] cluster serves as cofactor.

The enzyme catalyses hydrogen sulfide + 3 NADP(+) + 3 H2O = sulfite + 3 NADPH + 4 H(+). Its pathway is sulfur metabolism; hydrogen sulfide biosynthesis; hydrogen sulfide from sulfite (NADPH route): step 1/1. Its function is as follows. Component of the sulfite reductase complex that catalyzes the 6-electron reduction of sulfite to sulfide. This is one of several activities required for the biosynthesis of L-cysteine from sulfate. The polypeptide is Sulfite reductase [NADPH] hemoprotein beta-component (Bordetella petrii (strain ATCC BAA-461 / DSM 12804 / CCUG 43448)).